The following is an 87-amino-acid chain: Small ribosomal subunit protein uS17 (87 aa).

Belongs to the universal ribosomal protein uS17 family. Part of the 30S ribosomal subunit.

Functionally, one of the primary rRNA binding proteins, it binds specifically to the 5'-end of 16S ribosomal RNA. This chain is Small ribosomal subunit protein uS17, found in Syntrophobacter fumaroxidans (strain DSM 10017 / MPOB).